A 415-amino-acid chain; its full sequence is Lupus La protein homolog (415 aa).

The 93-residue stretch at 7–99 (NEKMTALEAK…RRSPSRPLPE (93 aa)) folds into the HTH La-type RNA-binding domain. Ser92 and Ser94 each carry phosphoserine. One can recognise an RRM domain in the interval 111–187 (RSVYIKGFPT…TNLLILFKED (77 aa)). Lys116 is subject to N6-acetyllysine. The residue at position 120 (Thr120) is a Phosphothreonine. Lys128, Lys327, and Lys356 each carry N6-acetyllysine. The region spanning 226–346 (EGKMGCLLKF…GRFKGSHVFT (121 aa)) is the xRRM domain. A disordered region spans residues 349–415 (RRFKGKGKGN…KKRENGARDK (67 aa)). Thr377 is modified (phosphothreonine). Residues 377 to 415 (TRFDDDDRRRGPMKRGRDGRDREEPASKHKKRENGARDK) are compositionally biased toward basic and acidic residues.

As to quaternary structure, interacts with DDX15. May interact with RUFY1. In terms of processing, phosphorylated.

The protein localises to the nucleus. In terms of biological role, binds to the 3' poly(U) terminus of nascent RNA polymerase III transcripts, protecting them from exonuclease digestion and facilitating their folding and maturation. The polypeptide is Lupus La protein homolog (Ssb) (Mus musculus (Mouse)).